We begin with the raw amino-acid sequence, 322 residues long: Crystallin J1A (322 aa).

It belongs to the ADP-ribosylglycohydrolase family. J1 crystallin subfamily. As to expression, expressed in the rhopalia. Present in both the large and small eyes.

The polypeptide is Crystallin J1A (Tripedalia cystophora (Jellyfish)).